We begin with the raw amino-acid sequence, 503 residues long: REST corepressor 2 (503 aa).

Residues Met1–Ser62 form a disordered region. The ELM2 domain occupies Ser41 to Thr126. Positions Pro127–Ser178 constitute an SANT 1 domain. Coiled coils occupy residues Val182–Lys206 and Gln286–Gly314. The 52-residue stretch at Lys327–Asn378 folds into the SANT 2 domain. Residues Glu385–Ser503 are disordered. A compositionally biased stretch (polar residues) spans Thr399 to Pro412. Residues Ser423–Ser442 are compositionally biased toward low complexity.

This sequence belongs to the CoREST family.

The protein localises to the nucleus. May act as a component of a corepressor complex that represses transcription. This is REST corepressor 2 (rcor2) from Xenopus laevis (African clawed frog).